The chain runs to 1952 residues: Protein ROS1A (1952 aa).

Disordered stretches follow at residues 72–157 (EVVG…CRSE), 693–778 (IIRP…ESTS), 1302–1334 (HGTS…DDNV), and 1367–1398 (LIEN…AGKK). Basic residues-rich tracts occupy residues 90-102 (PARK…HRPK) and 130-139 (GKRKYVRKKT). Basic and acidic residues-rich tracts occupy residues 709 to 720 (PRTDNHQVKVSE) and 727 to 747 (LPEK…EKPK). The segment covering 769-778 (TNPLQNESTS) has biased composition (polar residues). Positions 1388–1398 (AKRPRVGAGKK) are enriched in basic residues. [4Fe-4S] cluster-binding residues include C1582, C1589, C1592, and C1598.

Belongs to the DNA glycosylase family. DEMETER subfamily. [4Fe-4S] cluster serves as cofactor. Expressed in roots, leaf blades, leaf sheaths, apical and lateral shoot meristems, inflorescence meristems, lodicules, pollen grains, ovules and seeds. Expressed in vascular tissues of roots and leaves, pollen grains, pericarp, aleurone, and starchy endosperm.

It localises to the nucleus. Bifunctional DNA glycosylase/lyase, which excises 5-methylcytosine (5-meC) and 5-hydroxymethylcytosine (5-hmeC), leaving an apyrimidinic (AP) site that is subsequently incised by the lyase activity. DNA demethylase that is indispensable in both male and female gametophyte development. Involved in the regulation of DNA methylation in the promoters of RISBZ1/BZIP58 and DOF3/RPBF, two transcription factors that functions synergistically to positively regulate genes that are key players in the development of aleurone layers. Active DNA demethylation carried out by ROS1A in rice endosperms may restrict the number of aleurone cell layers. In Oryza sativa subsp. japonica (Rice), this protein is Protein ROS1A.